The following is a 420-amino-acid chain: ATP phosphoribosyltransferase regulatory subunit (420 aa).

Belongs to the class-II aminoacyl-tRNA synthetase family. HisZ subfamily. Heteromultimer composed of HisG and HisZ subunits.

The protein resides in the cytoplasm. The protein operates within amino-acid biosynthesis; L-histidine biosynthesis; L-histidine from 5-phospho-alpha-D-ribose 1-diphosphate: step 1/9. In terms of biological role, required for the first step of histidine biosynthesis. May allow the feedback regulation of ATP phosphoribosyltransferase activity by histidine. The protein is ATP phosphoribosyltransferase regulatory subunit of Bacillus anthracis (strain A0248).